The primary structure comprises 251 residues: Triosephosphate isomerase (251 aa).

2 residues coordinate substrate: Asn12 and Lys14. His96 serves as the catalytic Electrophile. Glu168 functions as the Proton acceptor in the catalytic mechanism.

It belongs to the triosephosphate isomerase family. In terms of assembly, homodimer.

It is found in the cytoplasm. The protein localises to the glycosome. It catalyses the reaction D-glyceraldehyde 3-phosphate = dihydroxyacetone phosphate. It participates in carbohydrate biosynthesis; gluconeogenesis. It functions in the pathway carbohydrate degradation; glycolysis; D-glyceraldehyde 3-phosphate from glycerone phosphate: step 1/1. The polypeptide is Triosephosphate isomerase (Leishmania mexicana).